Consider the following 959-residue polypeptide: Oxysterol-binding protein-related protein 6 (959 aa).

Positions 1–60 (MSSDEKGISPAHKTSTPTHRSASSSTSSQRESRQSIHVLERTASSSTEPSVSRQLLEPEP) are disordered. Ser2 bears the N-acetylserine mark. Residues 14 to 29 (TSTPTHRSASSSTSSQ) are compositionally biased toward low complexity. Residues 30–40 (RESRQSIHVLE) show a composition bias toward basic and acidic residues. Residue Ser35 is modified to Phosphoserine. Residues 42–53 (TASSSTEPSVSR) are compositionally biased toward polar residues. One can recognise a PH domain in the interval 86–181 (PDRHEGFMLK…WVSKLRHHRL (96 aa)). A phosphoserine mark is found at Ser190 and Ser290.

Belongs to the OSBP family. As to quaternary structure, homodimer. Interacts with OSBPL3. In terms of tissue distribution, expressed in skin, respiratory epithelium, small intestine epithelium, pancreas, striated muscle, brain, spinal ganglia, and nervous plexus of the intestine (at protein level). In the brain, specifically in the cerebellum, it is expressed in Purkinje and granule cells. Expressed in hepatocytes and macrophages.

The protein resides in the nucleus envelope. Its subcellular location is the cytoplasm. It localises to the cytosol. The protein localises to the endoplasmic reticulum membrane. It is found in the cell membrane. The protein resides in the endosome membrane. Regulates cellular transport and efflux of cholesterol. Plays a role in phosphatidylinositol-4-phophate (PI4P) turnover at the neuronal membrane. Binds via its PH domain PI4P, phosphatidylinositol-4,5-diphosphate, phosphatidylinositol-3,4,5-triphosphate, and phosphatidic acid. Weakly binds 25-hydroxycholesterol. The chain is Oxysterol-binding protein-related protein 6 (Osbpl6) from Mus musculus (Mouse).